Here is a 364-residue protein sequence, read N- to C-terminus: Protein Bop (364 aa).

The tract at residues 66-88 (STASGTCGGKPAERGPLAGHMPS) is disordered. The short motif at 114–128 (LDRFLAQLGDYMSFH) is the BH3 element. Residues 258–364 (QLTKESTPGP…PGEPPLSPGF (107 aa)) are disordered. Pro residues-rich tracts occupy residues 311-322 (AQRPDPAHPGGP) and 355-364 (PGEPPLSPGF).

As to quaternary structure, interacts (via BH3 domain) with VDAC1. Interacts with pro-survival Bcl-2 family members, BCL2, BCL2L1 isoform Bcl-X(L), MCL1, BCL2A1 and BCL2L2. Interacts with BAX and BAK1. Ubiquitously expressed.

The protein localises to the mitochondrion. Its function is as follows. Could induce apoptosis in a BH3 domain-dependent manner. The direct interaction network of Bcl-2 family members may play a key role in modulation RTL10/BOP intrinsic apoptotic signaling activity. This Homo sapiens (Human) protein is Protein Bop.